The sequence spans 413 residues: High zinc activated nuclear receptor protein (413 aa).

The nuclear receptor DNA-binding region spans 11-86; it reads LGNCKICLQR…EGMKIELVQL (76 aa). 2 consecutive NR C4-type zinc fingers follow at residues 14 to 34 and 50 to 69; these read CKIC…CRAC and CKEK…CRSC. Residues 101 to 412 form a required for zinc-binding region; sequence SIDPLFTPNV…TSQCIVHTKN (312 aa). The region spanning 135–396 is the NR LBD domain; sequence QMTSGYAMFL…VCCKNFKEDA (262 aa).

Belongs to the nuclear hormone receptor family. Weakly expressed in intestinal cells in the absence of zinc supplementation. Upon zinc supplementation, accumulates in alimentary tract cells, and it is mainly expressed in the intestine.

The protein resides in the nucleus. It localises to the cytoplasm. Nuclear receptor transcription factor that binds to DNA enhancer elements to promote the transcription of genes required to maintain micronutrient homeostasis. Direct binding to its ligand zinc allows for nuclear accumulation and activation, which thereby induces the transcription of genes required to promote the storage and detoxification of excess dietary zinc. This in turn, allows for internal zinc levels to be detected and regulated. In Caenorhabditis elegans, this protein is High zinc activated nuclear receptor protein.